We begin with the raw amino-acid sequence, 313 residues long: Protein-methionine-sulfoxide reductase catalytic subunit MsrP (313 aa).

Positions 1 to 46 form a signal peptide, tat-type signal; that stretch reads MPSYRAPKIAAAEITPERFFLDRRTFIAAAAGSLALSVPKPSRAAA. Residues Asn-70, 73 to 74, Cys-127, Thr-162, Asn-212, Arg-217, and 228 to 230 contribute to the Mo-molybdopterin site; these read YE and GIK.

The protein belongs to the MsrP family. As to quaternary structure, heterodimer of a catalytic subunit (MsrP) and a heme-binding subunit (MsrQ). Mo-molybdopterin serves as cofactor. In terms of processing, predicted to be exported by the Tat system. The position of the signal peptide cleavage has not been experimentally proven.

It is found in the periplasm. The enzyme catalyses L-methionyl-[protein] + a quinone + H2O = L-methionyl-(S)-S-oxide-[protein] + a quinol. The catalysed reaction is L-methionyl-[protein] + a quinone + H2O = L-methionyl-(R)-S-oxide-[protein] + a quinol. Part of the MsrPQ system that repairs oxidized periplasmic proteins containing methionine sulfoxide residues (Met-O), using respiratory chain electrons. Thus protects these proteins from oxidative-stress damage caused by reactive species of oxygen and chlorine generated by the host defense mechanisms. MsrPQ is essential for the maintenance of envelope integrity under bleach stress, rescuing a wide series of structurally unrelated periplasmic proteins from methionine oxidation. The catalytic subunit MsrP is non-stereospecific, being able to reduce both (R-) and (S-) diastereoisomers of methionine sulfoxide. The sequence is that of Protein-methionine-sulfoxide reductase catalytic subunit MsrP from Rhizobium meliloti (strain 1021) (Ensifer meliloti).